Reading from the N-terminus, the 416-residue chain is Serine hydroxymethyltransferase (416 aa).

(6S)-5,6,7,8-tetrahydrofolate is bound by residues L121 and 125-127 (GHL). At K229 the chain carries N6-(pyridoxal phosphate)lysine.

It belongs to the SHMT family. Homodimer. Pyridoxal 5'-phosphate serves as cofactor.

The protein localises to the cytoplasm. The catalysed reaction is (6R)-5,10-methylene-5,6,7,8-tetrahydrofolate + glycine + H2O = (6S)-5,6,7,8-tetrahydrofolate + L-serine. It functions in the pathway one-carbon metabolism; tetrahydrofolate interconversion. The protein operates within amino-acid biosynthesis; glycine biosynthesis; glycine from L-serine: step 1/1. Functionally, catalyzes the reversible interconversion of serine and glycine with tetrahydrofolate (THF) serving as the one-carbon carrier. This reaction serves as the major source of one-carbon groups required for the biosynthesis of purines, thymidylate, methionine, and other important biomolecules. Also exhibits THF-independent aldolase activity toward beta-hydroxyamino acids, producing glycine and aldehydes, via a retro-aldol mechanism. The sequence is that of Serine hydroxymethyltransferase from Neisseria gonorrhoeae.